The primary structure comprises 524 residues: Secologanin synthase 1 (524 aa).

Residues 1 to 11 (MEMDMDTIRKA) lie on the Lumenal side of the membrane. Residues 12 to 32 (IAATIFALVMAWAWRVLDWAW) form a helical membrane-spanning segment. Topologically, residues 33–524 (FTPKRIEKRL…SHVIYKKLES (492 aa)) are cytoplasmic. Residue Cys-470 coordinates heme.

Belongs to the cytochrome P450 family. Heme serves as cofactor. Upper and lower leaf epidermis.

Its subcellular location is the endoplasmic reticulum membrane. It carries out the reaction loganin + reduced [NADPH--hemoprotein reductase] + O2 = secologanin + oxidized [NADPH--hemoprotein reductase] + 2 H2O + H(+). It catalyses the reaction secologanin + reduced [NADPH--hemoprotein reductase] + O2 = secoxyloganin + oxidized [NADPH--hemoprotein reductase] + H2O + 2 H(+). It functions in the pathway alkaloid biosynthesis; secologanin biosynthesis. Component of the seco-iridoid and derivatives monoterpenoid indole alkaloids (MIAs, e.g. secologanin) biosynthesis pathway. Catalyzes the conversion of loganin into secologanin. Catalyzes the conversion of secologanin into secoxyloganin. This is Secologanin synthase 1 from Catharanthus roseus (Madagascar periwinkle).